A 445-amino-acid chain; its full sequence is Methionine aminopeptidase 2-3 (445 aa).

Positions 14–115 (ISDADANGAD…ENRYRTTSEE (102 aa)) are disordered. Positions 38–47 (EDDDSDDDVA) are enriched in acidic residues. The span at 60–75 (AKKKKNKKRKPKKKQP) shows a compositional bias: basic residues. Residues 85–95 (PLSQLFPNNTY) are compositionally biased toward polar residues. A compositionally biased stretch (basic and acidic residues) spans 97–115 (KGEEVEYKDENRYRTTSEE). Histidine 198 provides a ligand contact to substrate. A divalent metal cation is bound by residues aspartate 218, aspartate 229, and histidine 298. Histidine 306 provides a ligand contact to substrate. Positions 331 and 426 each coordinate a divalent metal cation.

It belongs to the peptidase M24A family. Methionine aminopeptidase eukaryotic type 2 subfamily. The cofactor is Co(2+). Zn(2+) is required as a cofactor. It depends on Mn(2+) as a cofactor. Fe(2+) serves as cofactor.

The protein localises to the cytoplasm. The enzyme catalyses Release of N-terminal amino acids, preferentially methionine, from peptides and arylamides.. Functionally, cotranslationally removes the N-terminal methionine from nascent proteins. The N-terminal methionine is often cleaved when the second residue in the primary sequence is small and uncharged (Met-Ala-, Cys, Gly, Pro, Ser, Thr, or Val). This chain is Methionine aminopeptidase 2-3, found in Neosartorya fischeri (strain ATCC 1020 / DSM 3700 / CBS 544.65 / FGSC A1164 / JCM 1740 / NRRL 181 / WB 181) (Aspergillus fischerianus).